A 71-amino-acid polypeptide reads, in one-letter code: Exodeoxyribonuclease 7 small subunit (71 aa).

This sequence belongs to the XseB family. In terms of assembly, heterooligomer composed of large and small subunits.

The protein resides in the cytoplasm. The enzyme catalyses Exonucleolytic cleavage in either 5'- to 3'- or 3'- to 5'-direction to yield nucleoside 5'-phosphates.. Its function is as follows. Bidirectionally degrades single-stranded DNA into large acid-insoluble oligonucleotides, which are then degraded further into small acid-soluble oligonucleotides. This Streptococcus suis (strain 98HAH33) protein is Exodeoxyribonuclease 7 small subunit.